The following is a 374-amino-acid chain: Protein A6 homolog (374 aa).

It belongs to the chordopoxvirinae A6 family.

It localises to the virion. Functionally, plays an essential role in immature virion (IV) to mature virion (MV) transition. The sequence is that of Protein A6 homolog from Vertebrata (FPV).